The primary structure comprises 510 residues: MQRRPILVVNFGSQYVQLIARRVRELGVYSEIVHWDTPVEEIKKKNPYGIIFSGGPASVYAEGAPLPDKRIYELGVPILGICYGLQVITHQLGGKVVRSEKQEYGRARLRIIKEDVIFEGIPKESDVWMSHADKVVELPEGFEVLAVSENSPYAVIANREKKIYGFQFHPEVTHTVFGKEMLANFIYGVCKAEKNWEMGDFIHEKIEEIRKTVGDAKVIAALSGGVDSTVAAVLTHRAIGDKLHCFFIDHGLLRYKEREEVEKNLRSLGLPLTVVDASEEFLEKLKGVEDPEEKRKIIGRTFIEVFEREAKKIEGAEFLLQGTLYPDVVESAGIKGSAKIKTHHNVGGLPERMNLKLLEPFRELFKDEVRKIGKLLGVPEEILRRHPFPGPGLAIRIIGEVNKKDLEILRKADYIFIQELKKEGLYDRVWQAFAVLLPVKSVGVMGDVRTYEKVVALRAVESVDGMTADWARLPYDFLDRVMRRIINEVEGVNRVVYDISSKPPSTIEWE.

In terms of domain architecture, Glutamine amidotransferase type-1 spans Pro5 to Asn195. Cys82 (nucleophile) is an active-site residue. Catalysis depends on residues His169 and Glu171. In terms of domain architecture, GMPS ATP-PPase spans Trp196 to Arg385. Residue Ser223–Thr229 coordinates ATP.

In terms of assembly, homodimer.

It catalyses the reaction XMP + L-glutamine + ATP + H2O = GMP + L-glutamate + AMP + diphosphate + 2 H(+). The protein operates within purine metabolism; GMP biosynthesis; GMP from XMP (L-Gln route): step 1/1. Functionally, catalyzes the synthesis of GMP from XMP. The polypeptide is GMP synthase [glutamine-hydrolyzing] (guaA) (Aquifex aeolicus (strain VF5)).